Here is a 175-residue protein sequence, read N- to C-terminus: Heme-dependent oxidative N-demethylase delta subunit (175 aa).

As to quaternary structure, the heme-dependent oxidative N-demethylase (HODM) is a heterotetramer composed of a catalytic alpha subunit, a FMN/2Fe-2S-dependent oxidoreductase beta subunit, a gamma subunit with putative aminotransferase activity, and a delta subunit of unknown function.

Component of the heme-dependent oxidative N-demethylase (HODM) enzyme, that catalyzes the NADPH-dependent oxidation of dimethylamine (DMA) to methylamine (MA) and formaldehyde. Functions in bacterial methylated amine catabolism, linking alkylamine oxidation to the tetrahydrofolate C1 pool. The function of the delta subunit is unknown. The polypeptide is Heme-dependent oxidative N-demethylase delta subunit (Ectopseudomonas mendocina (strain ymp) (Pseudomonas mendocina)).